Reading from the N-terminus, the 341-residue chain is Phosphoribosylformylglycinamidine cyclo-ligase (341 aa).

It belongs to the AIR synthase family.

The protein resides in the cytoplasm. It catalyses the reaction 2-formamido-N(1)-(5-O-phospho-beta-D-ribosyl)acetamidine + ATP = 5-amino-1-(5-phospho-beta-D-ribosyl)imidazole + ADP + phosphate + H(+). Its pathway is purine metabolism; IMP biosynthesis via de novo pathway; 5-amino-1-(5-phospho-D-ribosyl)imidazole from N(2)-formyl-N(1)-(5-phospho-D-ribosyl)glycinamide: step 2/2. This is Phosphoribosylformylglycinamidine cyclo-ligase from Thermosynechococcus vestitus (strain NIES-2133 / IAM M-273 / BP-1).